Consider the following 617-residue polypeptide: Protelomerase (617 aa).

DNA contacts are provided by Arg-270, Lys-295, Arg-376, and His-409. The active-site Nucleophile is the Tyr-418. Residues 535–562 are compositionally biased toward acidic residues; it reads DAEEDEIEEDFTDEEIDDTEFDVSDNAS. The segment at 535–575 is disordered; that stretch reads DAEEDEIEEDFTDEEIDDTEFDVSDNASDEDKPEDKPRFAA. Residues 563 to 575 are compositionally biased toward basic and acidic residues; it reads DEDKPEDKPRFAA.

The protein belongs to the Caudoviricetes Protelomerase family. As to quaternary structure, monomer. Homodimer; in presence of DNA.

Its function is as follows. Converts the circular intermediates produced by the viral replication and carrying a joined telomere site to a linear DNA molecule with covalently closed hairpin ends. The viral circular DNA is cleaved at a palindromic site called telRL thereby generating a linear prophage plasmid with telomeres. Binds covalently to the 3'-phosphoryl of the cleaved strands. This chain is Protelomerase (tel), found in Yersinia enterocolitica (Bacteriophage PY54).